The chain runs to 121 residues: uncharacterized protein (121 aa).

This is an uncharacterized protein from Ictaluridae (bullhead catfishes).